Here is a 272-residue protein sequence, read N- to C-terminus: Imidazole glycerol phosphate synthase subunit HisF (272 aa).

Active-site residues include D12 and D131.

The protein belongs to the HisA/HisF family. In terms of assembly, heterodimer of HisH and HisF.

It is found in the cytoplasm. The enzyme catalyses 5-[(5-phospho-1-deoxy-D-ribulos-1-ylimino)methylamino]-1-(5-phospho-beta-D-ribosyl)imidazole-4-carboxamide + L-glutamine = D-erythro-1-(imidazol-4-yl)glycerol 3-phosphate + 5-amino-1-(5-phospho-beta-D-ribosyl)imidazole-4-carboxamide + L-glutamate + H(+). The protein operates within amino-acid biosynthesis; L-histidine biosynthesis; L-histidine from 5-phospho-alpha-D-ribose 1-diphosphate: step 5/9. Functionally, IGPS catalyzes the conversion of PRFAR and glutamine to IGP, AICAR and glutamate. The HisF subunit catalyzes the cyclization activity that produces IGP and AICAR from PRFAR using the ammonia provided by the HisH subunit. This is Imidazole glycerol phosphate synthase subunit HisF from Methanopyrus kandleri (strain AV19 / DSM 6324 / JCM 9639 / NBRC 100938).